A 643-amino-acid chain; its full sequence is MTDESDNYNDFMMSDEDMDSIEMEDEENDVEGDEGQRGGQEWVQNYEQGLSLWNDENYVAARQVFLKTLSMLVSEEELIEMRCKIHRQVLECWCKILMYGEPDNEQSTEIIADFRNFVELVNELHGKANCSLDLSSMFHHVTMDFMPNIYDRTFIPGITDDEESSKWAKMTFKTTILQILQGSWVCHTFPEVGLLLQQELHVLQAWIKTFDKERDLYAISESLRKDINTLNELQLILQCYIARYIEDQHLLCNEGEVFRMCLNQLDQKCNESLAVAQRSDINLILHFSKALFLILFELDQDDLGDGNKVTGSTCVRRFVTIHKFYQNIECCKEEFWECLKNLEELGTNKFRFERFMQIIVGGFVLCAMIMHRGSQTRLAGTSGNADINPFDYEQLRIAPDHIFVDKLRRIYDVFVGLQIQEMHSCLIELECIRAPLSRLFDQVCYLIQKRKLFSEIAPIYSCISIQDLRQKLQIDPSVPPTRDEILVHLMRYCMQDRGINFKLDLVADTVTFYSEQHSEPLHDAVFSETRMGHKSHKSSISKDRAIVEDIKAAHEMPEVEYAHDIGILESQVDSQSHSKSNTKSMSRHVSGHDPDSFGQDTISFFDTLRLARETYQGSNIDNSVYTIAKLTNEALQEISNDVR.

The span at 1–33 shows a compositional bias: acidic residues; the sequence is MTDESDNYNDFMMSDEDMDSIEMEDEENDVEGD. The interval 1–37 is disordered; that stretch reads MTDESDNYNDFMMSDEDMDSIEMEDEENDVEGDEGQR. Residues 331 to 517 form the PCI domain; it reads CKEEFWECLK…DTVTFYSEQH (187 aa). Positions 573–584 are enriched in polar residues; sequence DSQSHSKSNTKS. The segment at 573–594 is disordered; the sequence is DSQSHSKSNTKSMSRHVSGHDP.

In terms of assembly, component of a COP9 signalosome-like (CSN) complex.

The protein resides in the cytoplasm. It is found in the nucleus. Its function is as follows. Component of the COP9 signalosome (CSN) complex that acts as an regulator of the ubiquitin (Ubl) conjugation pathway by mediating the deneddylation of the cullin subunit of SCF-type E3 ubiquitin-protein ligase complexes. The CSN complex is involved in the regulation of the mating pheromone response. The protein is COP9 signalosome complex subunit 10 (RRI2) of Candida glabrata (strain ATCC 2001 / BCRC 20586 / JCM 3761 / NBRC 0622 / NRRL Y-65 / CBS 138) (Yeast).